Consider the following 428-residue polypeptide: Ribosome biogenesis protein WDR12 homolog (428 aa).

Residues 13–97 are ubiquitin-like (UBL) domain; that stretch reads LQVHFTTKQK…EDTIELEYVE (85 aa). WD repeat units follow at residues 109 to 146, 148 to 190, 197 to 236, 259 to 297, 299 to 338, 344 to 384, and 388 to 426; these read LHDDWVSAVQAKDGWILTGTYDNTVNLWNTKGKHKLTI, GHVA…NTAE, GHERGVGCIAVNPAKTQMASGSMDTMLKIWSTELQADKGE, GHREFVSGVQWIDNTTIATCSWDHTIKLWDLSMGGIKTE, TGNKSFFDLSYSPLNGMIITASPDKNLRLYDPRSKHGNFV, GHSQ…APIF, and GHEDKVLACDWSNPKYILSGGSDNAVRVFKSRIAVDNTK.

This sequence belongs to the WD repeat WDR12/YTM1 family.

The protein localises to the nucleus. It is found in the nucleolus. The protein resides in the nucleoplasm. In terms of biological role, required for maturation of ribosomal RNAs and formation of the large ribosomal subunit. The sequence is that of Ribosome biogenesis protein WDR12 homolog from Anopheles gambiae (African malaria mosquito).